The primary structure comprises 115 residues: Toxin CSTX-9 (115 aa).

Residues 1–20 form the signal peptide; the sequence is MKVLVICAVLFLAIFSNSSA. The propeptide occupies 21–47; the sequence is ETEDDFLEDESFEADDVIPFLAREQVR. Cystine bridges form between Cys-53-Cys-68, Cys-60-Cys-77, Cys-67-Cys-95, and Cys-79-Cys-93.

It belongs to the neurotoxin 19 (CSTX) family. Monomer. Interacts with CSTX-13 (AC P83919) (Kd=370 nM), but does not interact with CSTX-1 (AC P81694). In terms of tissue distribution, expressed by the venom gland.

It localises to the secreted. The protein localises to the target cell membrane. Functionally, synergistic toxin that induces or increases a cytolytic effect when combined with CSTX-1 (AC P81694) or CSTX-13 (AC P83919). Potassium ions and M-ctenitoxin-Cs1a (AC P83619) have also an effect on its activity. When alone, has no insecticidal activity. The polypeptide is Toxin CSTX-9 (Cupiennius salei (American wandering spider)).